The primary structure comprises 452 residues: Lysine-rich nucleolar protein 1 (452 aa).

Disordered stretches follow at residues 1-28, 55-161, and 184-305; these read MITK…VKEP, VIQE…AFSG, and REQA…PDTD. K7 is covalently cross-linked (Glycyl lysine isopeptide (Lys-Gly) (interchain with G-Cter in SUMO2)). Residues 65 to 75 are compositionally biased toward basic residues; that stretch reads LVKKKKKKKGH. Positions 78–98 are enriched in basic and acidic residues; sequence ICEEHLEPEITLRAGRTERSH. S112 bears the Phosphoserine mark. Residue K126 forms a Glycyl lysine isopeptide (Lys-Gly) (interchain with G-Cter in SUMO2) linkage. Residues 127-139 are compositionally biased toward basic and acidic residues; it reads TSPDPRQDEEVTR. S128 is modified (phosphoserine). Composition is skewed to basic residues over residues 140–151 and 258–267; these read VGKKLKKHKKEK and SVKKKVKSKK. S258 carries the post-translational modification Phosphoserine. K280 participates in a covalent cross-link: Glycyl lysine isopeptide (Lys-Gly) (interchain with G-Cter in SUMO2). Acidic residues predominate over residues 293-305; that stretch reads VAEEPWEEEPDTD. The tract at residues 300–452 is interaction with ZNF106; it reads EEPDTDLEVV…NASKSIKFED (153 aa). T304 is modified (phosphothreonine). Residues K313, K347, K367, K369, and K401 each participate in a glycyl lysine isopeptide (Lys-Gly) (interchain with G-Cter in SUMO2) cross-link. The residue at position 424 (R424) is an Omega-N-methylarginine. K436 is covalently cross-linked (Glycyl lysine isopeptide (Lys-Gly) (interchain with G-Cter in SUMO2)).

In terms of assembly, interacts with ZNF106.

It localises to the nucleus. The protein localises to the nucleolus. The protein is Lysine-rich nucleolar protein 1 (KNOP1) of Bos taurus (Bovine).